A 682-amino-acid chain; its full sequence is ATP-dependent DNA helicase RecG (682 aa).

The segment at 46-139 is wedge domain; sequence ELRDLEEVKH…LKNGPHQEDK (94 aa). One can recognise a Helicase ATP-binding domain in the interval 271–432; it reads DMSSPYRMNR…VFGEMDVSVI (162 aa). Residue 284–291 coordinates ATP; that stretch reads GDVGSGKT. The short motif at 385 to 388 is the DEAH box element; sequence DEQH. The Helicase C-terminal domain maps to 451 to 611; that stretch reads MLDRILAFVE…GFELSEKDLE (161 aa).

This sequence belongs to the helicase family. RecG subfamily. Monomer. Interacts with SSB (sbbA), via the latter's 6 C-terminal residues. Colocalizes with DNA pol III subunit gamma/tau (dnaX).

The protein resides in the cytoplasm. It is found in the nucleoid. It carries out the reaction Couples ATP hydrolysis with the unwinding of duplex DNA by translocating in the 3'-5' direction.. The catalysed reaction is ATP + H2O = ADP + phosphate + H(+). Its activity is regulated as follows. Replication fork regression on Holliday junctions (HJ) is inhibited by DisA; DisA inhibits the ATPase activity of RecG. Critical role in recombination and DNA repair. Helps process Holliday junction intermediates to mature products by catalyzing branch migration. Has a DNA unwinding activity characteristic of a DNA helicase with 3'-5' polarity. Unwinds branched duplex DNA (Y-DNA), Holliday junction (HJ) DNA and partially replicated forks as well as catalyzing fork reversal/regression. Does not seem to unwind R-loops. Inhibits the diadenylate cyclase (DAC) activity of DisA in the presence but not absence of HJ DNA, possibly by relocating DisA from the junction. The protein is ATP-dependent DNA helicase RecG of Bacillus subtilis (strain 168).